The sequence spans 493 residues: Glutamyl-tRNA(Gln) amidotransferase subunit A (493 aa).

Active-site charge relay system residues include Lys78 and Ser158. Ser182 acts as the Acyl-ester intermediate in catalysis.

Belongs to the amidase family. GatA subfamily. As to quaternary structure, heterotrimer of A, B and C subunits.

The enzyme catalyses L-glutamyl-tRNA(Gln) + L-glutamine + ATP + H2O = L-glutaminyl-tRNA(Gln) + L-glutamate + ADP + phosphate + H(+). Functionally, allows the formation of correctly charged Gln-tRNA(Gln) through the transamidation of misacylated Glu-tRNA(Gln) in organisms which lack glutaminyl-tRNA synthetase. The reaction takes place in the presence of glutamine and ATP through an activated gamma-phospho-Glu-tRNA(Gln). In Rickettsia rickettsii (strain Iowa), this protein is Glutamyl-tRNA(Gln) amidotransferase subunit A.